A 214-amino-acid polypeptide reads, in one-letter code: rRNA methyltransferase 2, mitochondrial (214 aa).

The N-terminal 18 residues, 1–18, are a transit peptide targeting the mitochondrion; the sequence is MFSTKKSQGNLHKYIQRQ. Residues 63–66, aspartate 83, 100–101, and aspartate 125 contribute to the S-adenosyl-L-methionine site; these read PGSW and DI. Lysine 169 (proton acceptor) is an active-site residue.

The protein belongs to the class I-like SAM-binding methyltransferase superfamily. RNA methyltransferase RlmE family.

Its subcellular location is the mitochondrion. The enzyme catalyses a uridine in rRNA + S-adenosyl-L-methionine = a 2'-O-methyluridine in rRNA + S-adenosyl-L-homocysteine + H(+). Its function is as follows. S-adenosyl-L-methionine-dependent 2'-O-ribose methyltransferase that catalyzes the formation of 2'-O-methyluridine at position 808 (Um808) in the mitochondrial large subunit ribosomal RNA (mtLSU rRNA), a universally conserved modification in the peptidyl transferase domain of the mtLSU rRNA. This activity may require prior 2'-O-methylguanosine modification at position 809 (Gm809) by MRM3. Essential for late-stage assembly of mtLSU required for efficient translation of mitochondrial DNA encoded proteins; methyltransferase activity is not required for this function. Essential for mitochondrial respiratory function. In Caenorhabditis elegans, this protein is rRNA methyltransferase 2, mitochondrial.